The primary structure comprises 31 residues: Cytochrome b6-f complex subunit 6 (31 aa).

The chain crosses the membrane as a helical span at residues 3 to 23 (VFLGYIIFLAAFFGLATGLFL).

The protein belongs to the PetL family. As to quaternary structure, the 4 large subunits of the cytochrome b6-f complex are cytochrome b6, subunit IV (17 kDa polypeptide, PetD), cytochrome f and the Rieske protein, while the 4 small subunits are PetG, PetL, PetM and PetN. The complex functions as a dimer.

The protein resides in the plastid. It localises to the chloroplast thylakoid membrane. Functionally, component of the cytochrome b6-f complex, which mediates electron transfer between photosystem II (PSII) and photosystem I (PSI), cyclic electron flow around PSI, and state transitions. PetL is important for photoautotrophic growth as well as for electron transfer efficiency and stability of the cytochrome b6-f complex. In Pyropia yezoensis (Susabi-nori), this protein is Cytochrome b6-f complex subunit 6.